The sequence spans 387 residues: Methylthioribose-1-phosphate isomerase (387 aa).

Catalysis depends on D257, which acts as the Proton donor.

Belongs to the eIF-2B alpha/beta/delta subunits family. MtnA subfamily.

The protein localises to the cytoplasm. Its subcellular location is the nucleus. The catalysed reaction is 5-(methylsulfanyl)-alpha-D-ribose 1-phosphate = 5-(methylsulfanyl)-D-ribulose 1-phosphate. Its pathway is amino-acid biosynthesis; L-methionine biosynthesis via salvage pathway; L-methionine from S-methyl-5-thio-alpha-D-ribose 1-phosphate: step 1/6. Catalyzes the interconversion of methylthioribose-1-phosphate (MTR-1-P) into methylthioribulose-1-phosphate (MTRu-1-P). This chain is Methylthioribose-1-phosphate isomerase (mri1), found in Neosartorya fischeri (strain ATCC 1020 / DSM 3700 / CBS 544.65 / FGSC A1164 / JCM 1740 / NRRL 181 / WB 181) (Aspergillus fischerianus).